Consider the following 371-residue polypeptide: Trans-enoyl reductase mycC (371 aa).

51 to 54 (CDWK) provides a ligand contact to NADP(+). Substrate is bound at residue 140 to 147 (CVVGTVGL). Residues 182-185 (STAS), 205-208 (SPAN), tyrosine 223, and 270-271 (FE) each bind NADP(+). 291-295 (GIRLL) provides a ligand contact to substrate. 361–362 (VS) is an NADP(+) binding site.

This sequence belongs to the zinc-containing alcohol dehydrogenase family. Monomer.

It catalyses the reaction L-leucine + 8 malonyl-CoA + 4 S-adenosyl-L-methionine + ATP + 9 NADPH + 12 H(+) = (5S)-5-(2-methylpropyl)-3-[(2E,6R,8E,10E,12E)-6,8,10,12-tetramethyltetradeca-2,8,10,12-tetraenoyl]-2,5-dihydro-1H-pyrrol-2-one + AMP + 4 S-adenosyl-L-homocysteine + 8 CO2 + diphosphate + 9 NADP(+) + 8 CoA + 7 H2O. It participates in mycotoxin biosynthesis. Trans-enoyl reductase; part of the gene cluster that mediates the biosynthesis of myceliothermophins, mycotoxins that contain a trans-fused decalin ring system connected to a conjugated 3-pyrrolin-2-one moiety and that have potential anti-tumor properties. The polyketide synthase module (PKS) of the PKS-NRPS mycA is responsible for the synthesis of the octaketide backbone. The downstream nonribosomal peptide synthetase (NRPS) module then amidates the carboxyl end of the octaketide with a leucine. A reductase-like domain (R) at the C-terminus catalyzes the reductive release of the polyketide-amino acid intermediate. Because mycA lacks a designated enoylreductase (ER) domain, the required activity is provided the enoyl reductase mycC. Following mycA-catalyzed construction and release of aminoacyl polyketide aldehyde, Knoevenagel condensation yields the expected ketone. This C18 keto acyclic precursor is the substrate of the Diels-Alderase mycB, that catalyzes the Diels-Alder cycloaddition to produce myceliothermophin E. A yet unknown oxygenase involved in the production of myceliothermophin A, via substitution with a hydroxyl group at the C21, has still to be identified. This is Trans-enoyl reductase mycC from Thermothelomyces thermophilus (strain ATCC 42464 / BCRC 31852 / DSM 1799) (Sporotrichum thermophile).